The chain runs to 377 residues: 23S rRNA (uracil(747)-C(5))-methyltransferase RlmC (377 aa).

Positions 3, 11, 14, and 87 each coordinate [4Fe-4S] cluster. Residues Q212, F241, E262, and N307 each coordinate S-adenosyl-L-methionine. C334 acts as the Nucleophile in catalysis.

Belongs to the class I-like SAM-binding methyltransferase superfamily. RNA M5U methyltransferase family. RlmC subfamily.

It carries out the reaction uridine(747) in 23S rRNA + S-adenosyl-L-methionine = 5-methyluridine(747) in 23S rRNA + S-adenosyl-L-homocysteine + H(+). Its function is as follows. Catalyzes the formation of 5-methyl-uridine at position 747 (m5U747) in 23S rRNA. The sequence is that of 23S rRNA (uracil(747)-C(5))-methyltransferase RlmC from Edwardsiella ictaluri (strain 93-146).